The sequence spans 572 residues: Probable terpene synthase 11 (572 aa).

Mg(2+)-binding residues include D317, D321, and E469. Residues 317–321 (DDIFD) carry the DDXXD motif motif.

Belongs to the terpene synthase family. Requires Mg(2+) as cofactor.

Probable sesquiterpene synthase. The polypeptide is Probable terpene synthase 11 (TPS11) (Ricinus communis (Castor bean)).